The sequence spans 588 residues: L-fucose isomerase (588 aa).

Catalysis depends on proton acceptor residues Glu335 and Asp359. Residues Glu335, Asp359, and His525 each coordinate Mn(2+).

The protein belongs to the L-fucose isomerase family. It depends on Mn(2+) as a cofactor.

It is found in the cytoplasm. It catalyses the reaction L-fucose = L-fuculose. It functions in the pathway carbohydrate degradation; L-fucose degradation; L-lactaldehyde and glycerone phosphate from L-fucose: step 1/3. Its function is as follows. Converts the aldose L-fucose into the corresponding ketose L-fuculose. In Streptococcus pneumoniae (strain JJA), this protein is L-fucose isomerase.